The chain runs to 364 residues: Uroporphyrinogen decarboxylase (364 aa).

Substrate contacts are provided by residues 28-32 (RQAGR), aspartate 78, tyrosine 160, threonine 215, and histidine 333.

The protein belongs to the uroporphyrinogen decarboxylase family. As to quaternary structure, homodimer.

The protein resides in the cytoplasm. The catalysed reaction is uroporphyrinogen III + 4 H(+) = coproporphyrinogen III + 4 CO2. Its pathway is porphyrin-containing compound metabolism; protoporphyrin-IX biosynthesis; coproporphyrinogen-III from 5-aminolevulinate: step 4/4. Catalyzes the decarboxylation of four acetate groups of uroporphyrinogen-III to yield coproporphyrinogen-III. This is Uroporphyrinogen decarboxylase from Burkholderia cenocepacia (strain ATCC BAA-245 / DSM 16553 / LMG 16656 / NCTC 13227 / J2315 / CF5610) (Burkholderia cepacia (strain J2315)).